The chain runs to 3579 residues: Protocadherin-like wing polarity protein stan (3579 aa).

An N-terminal signal peptide occupies residues 1–29 (MQTREFPQRPLGLLLVLLVVLLQSSLIKS). Residues 30–2816 (YLIIVHEDTP…EPSLLVQITS (2787 aa)) lie on the Extracellular side of the membrane. 3 N-linked (GlcNAc...) asparagine glycosylation sites follow: N46, N179, and N340. 8 consecutive Cadherin domains span residues 360 to 464 (EQAL…SPTF), 465 to 581 (EAEQ…YPQF), 582 to 689 (SERT…APRF), 690 to 794 (YTSQ…DPAF), 795 to 897 (NPKY…APIF), 898 to 1007 (ENAP…APAF), 1008 to 1113 (KSPL…PPTF), and 1114 to 1220 (ASDK…APVL). N671 carries an N-linked (GlcNAc...) asparagine glycan. An N-linked (GlcNAc...) asparagine glycan is attached at N886. Residues N1269, N1374, and N1441 are each glycosylated (N-linked (GlcNAc...) asparagine). One can recognise an EGF-like 1; calcium-binding domain in the interval 1482–1518 (EVDLCYSDPCQNGGTCVRREGGYTCVCPSTHTGQNCE). 3 disulfides stabilise this stretch: C1486/C1497, C1491/C1506, and C1508/C1517. The 198-residue stretch at 1556–1753 (LRARAFGRNS…VADNGTLAGC (198 aa)) folds into the Laminin G-like 1 domain. 3 N-linked (GlcNAc...) asparagine glycosylation sites follow: N1650, N1678, and N1747. 4 disulfide bridges follow: C1727/C1753, C1760/C1771, C1765/C1780, and C1782/C1791. In terms of domain architecture, EGF-like 2; calcium-binding spans 1756-1792 (KAPLCQSEPCFNGGTCREGWGTYSCECPEGYAGNSCQ). Positions 1796-1963 (PAPWRFSGDG…TIRENVEDGC (168 aa)) constitute a Laminin G-like 2 domain. N1843 is a glycosylation site (N-linked (GlcNAc...) asparagine). Intrachain disulfides connect C1937/C1963, C1969/C1979, C1973/C1988, and C1990/C1999. One can recognise an EGF-like 3; calcium-binding domain in the interval 1965–2000 (SRAQCPDHCPNHSSCQSSWDLSTCECDSGYVGTDCA). N1975 carries N-linked (GlcNAc...) asparagine glycosylation. Residues N2016, N2028, N2071, and N2088 are each glycosylated (N-linked (GlcNAc...) asparagine). Disulfide bonds link C2092–C2095, C2097–C2114, C2116–C2125, and C2128–C2140. Positions 2095–2142 (CDCYSIGSFSGACNPLTGQCECREGVIGRRCDSCSNPYAEVTLSGCEV) constitute a Laminin EGF-like domain. Residues N2196 and N2320 are each glycosylated (N-linked (GlcNAc...) asparagine). Over residues 2553 to 2562 (QETQRLEIPS) the composition is skewed to basic and acidic residues. Disordered stretches follow at residues 2553–2582 (QETQ…STEQ), 2610–2635 (HEIP…EREP), and 2654–2684 (VISP…GENE). Residues 2567–2579 (SSSSPSSSSSSGS) show a composition bias toward low complexity. The 151-residue stretch at 2653-2803 (EVISPDSPEM…AVIVDVIDPE (151 aa)) folds into the GAIN-B domain. 2 disulfides stabilise this stretch: C2747-C2785 and C2762-C2787. A GPS region spans residues 2747 to 2803 (CVRWNSFTNQWTRLGCQTEIPDFDGDFNPAAQQAILVNCSCTHISSYAVIVDVIDPE). N-linked (GlcNAc...) asparagine glycosylation occurs at N2784. Residues 2817–2837 (YSAFLVSLPLLLGVLLALALL) form a helical membrane-spanning segment. The Cytoplasmic portion of the chain corresponds to 2838–2845 (RGQQTNSN). The helical transmembrane segment at 2846–2866 (TIHQNIVLCVFCAELLFFVGM) threads the bilayer. Residues 2867-2883 (QSRRQLLESEFPCKLTA) lie on the Extracellular side of the membrane. The helical transmembrane segment at 2884-2904 (ICLHYFWLAAFAWTTVDCVHL) threads the bilayer. The Cytoplasmic portion of the chain corresponds to 2905-2919 (YRMLTEMRDINHGPM). Residues 2920 to 2940 (GFYFAMGYGAPAIVVGLSVGV) form a helical membrane-spanning segment. Residues 2941-2959 (RAHEYGNSLFCWLSVYEPV) are Extracellular-facing. Residues 2960–2980 (VWWLVGPIAGMSVVNLLILFV) traverse the membrane as a helical segment. Over 2981-3000 (SVKAAFTLKDHVLGFGNLRT) the chain is Cytoplasmic. The chain crosses the membrane as a helical span at residues 3001-3021 (LLWLSVVSLPLMGVMWVLAVL). Residues 3022 to 3031 (AASEHSQLLS) are Extracellular-facing. Residues 3032–3052 (LLLSGVVLLHALFCLIGYCII) traverse the membrane as a helical segment. Residues 3053-3579 (NKRVRENLQR…RNIDDDETTV (527 aa)) lie on the Cytoplasmic side of the membrane. Disordered stretches follow at residues 3111-3225 (GISA…TPAY), 3343-3377 (LYGR…SGSQ), 3458-3486 (YHQQ…YHFP), and 3499-3579 (LSHT…ETTV). Over residues 3113–3128 (SASSTTSRSTAKTSSS) the composition is skewed to low complexity. Residues 3167–3191 (RGGEEKPSRRQRKDSDSGSETDGRS) are compositionally biased toward basic and acidic residues. Phosphoserine is present on residues S3199 and S3200. Over residues 3208 to 3223 (ARSSGTHRSTAVSSTP) the composition is skewed to polar residues. Positions 3343-3352 (LYGRRGEYPD) are enriched in basic and acidic residues. The segment covering 3459 to 3468 (HQQQQQQQQH) has biased composition (low complexity). Over residues 3469–3482 (HLQDRLSEGSDKNG) the composition is skewed to basic and acidic residues. Over residues 3501–3513 (HTQPPSLHGSQLM) the composition is skewed to polar residues.

Belongs to the G-protein coupled receptor 2 family. As to quaternary structure, interacts with ATP6AP2 (via N-terminus). In terms of tissue distribution, in the pupal wing, expressed at relatively even levels in all regions. Abundant in 6-9 hours embryos. Expressed at higher levels in pupae than larvae.

The protein resides in the cell membrane. It is found in the apical cell membrane. Functionally, involved in the fz signaling pathway that controls wing tissue polarity. Also mediates homophilic cell adhesion. May play a role in initiating prehair morphogenesis. May play a critical role in tissue polarity and in formation of normal dendrite fields. During planar cell polarity, stabilizes asymmetric PCP domains together with ATP6AP2. This Drosophila melanogaster (Fruit fly) protein is Protocadherin-like wing polarity protein stan (stan).